The primary structure comprises 90 residues: Large ribosomal subunit protein eL33 (90 aa).

It belongs to the eukaryotic ribosomal protein eL33 family.

This Methanopyrus kandleri (strain AV19 / DSM 6324 / JCM 9639 / NBRC 100938) protein is Large ribosomal subunit protein eL33.